The chain runs to 564 residues: Dihydroxy-acid dehydratase (564 aa).

Aspartate 80 serves as a coordination point for Mg(2+). Cysteine 121 serves as a coordination point for [2Fe-2S] cluster. Residues aspartate 122 and lysine 123 each coordinate Mg(2+). An N6-carboxylysine modification is found at lysine 123. A [2Fe-2S] cluster-binding site is contributed by cysteine 194. Glutamate 447 contributes to the Mg(2+) binding site. The active-site Proton acceptor is the serine 473.

It belongs to the IlvD/Edd family. As to quaternary structure, homodimer. [2Fe-2S] cluster serves as cofactor. Requires Mg(2+) as cofactor.

It catalyses the reaction (2R)-2,3-dihydroxy-3-methylbutanoate = 3-methyl-2-oxobutanoate + H2O. The catalysed reaction is (2R,3R)-2,3-dihydroxy-3-methylpentanoate = (S)-3-methyl-2-oxopentanoate + H2O. The protein operates within amino-acid biosynthesis; L-isoleucine biosynthesis; L-isoleucine from 2-oxobutanoate: step 3/4. Its pathway is amino-acid biosynthesis; L-valine biosynthesis; L-valine from pyruvate: step 3/4. In terms of biological role, functions in the biosynthesis of branched-chain amino acids. Catalyzes the dehydration of (2R,3R)-2,3-dihydroxy-3-methylpentanoate (2,3-dihydroxy-3-methylvalerate) into 2-oxo-3-methylpentanoate (2-oxo-3-methylvalerate) and of (2R)-2,3-dihydroxy-3-methylbutanoate (2,3-dihydroxyisovalerate) into 2-oxo-3-methylbutanoate (2-oxoisovalerate), the penultimate precursor to L-isoleucine and L-valine, respectively. This chain is Dihydroxy-acid dehydratase, found in Listeria welshimeri serovar 6b (strain ATCC 35897 / DSM 20650 / CCUG 15529 / CIP 8149 / NCTC 11857 / SLCC 5334 / V8).